Reading from the N-terminus, the 435-residue chain is Eukaryotic peptide chain release factor subunit 1-3 (435 aa).

Ala-2 bears the N-acetylalanine mark.

Belongs to the eukaryotic release factor 1 family. Heterodimer of two subunits, one of which binds GTP.

The protein resides in the cytoplasm. Directs the termination of nascent peptide synthesis (translation) in response to the termination codons UAA, UAG and UGA. Modulates plant growth and development. This is Eukaryotic peptide chain release factor subunit 1-3 (ERF1-3) from Arabidopsis thaliana (Mouse-ear cress).